The chain runs to 306 residues: Putative NylC-analogous protein (306 aa).

Belongs to the peptidase S58 family.

The polypeptide is Putative NylC-analogous protein (Agromyces sp. (strain KY5R)).